Consider the following 475-residue polypeptide: Ribulose bisphosphate carboxylase large chain (475 aa).

Residues 1–2 (MS) constitute a propeptide that is removed on maturation. An N-acetylproline modification is found at P3. Residue K14 is modified to N6,N6,N6-trimethyllysine. Residues N123 and T173 each coordinate substrate. The Proton acceptor role is filled by K175. Residue K177 participates in substrate binding. Mg(2+) is bound by residues K201, D203, and E204. At K201 the chain carries N6-carboxylysine. The active-site Proton acceptor is H294. The substrate site is built by R295, H327, and S379.

Belongs to the RuBisCO large chain family. Type I subfamily. In terms of assembly, heterohexadecamer of 8 large chains and 8 small chains; disulfide-linked. The disulfide link is formed within the large subunit homodimers. Mg(2+) is required as a cofactor. The disulfide bond which can form in the large chain dimeric partners within the hexadecamer appears to be associated with oxidative stress and protein turnover.

It is found in the plastid. Its subcellular location is the chloroplast. The catalysed reaction is 2 (2R)-3-phosphoglycerate + 2 H(+) = D-ribulose 1,5-bisphosphate + CO2 + H2O. It carries out the reaction D-ribulose 1,5-bisphosphate + O2 = 2-phosphoglycolate + (2R)-3-phosphoglycerate + 2 H(+). In terms of biological role, ruBisCO catalyzes two reactions: the carboxylation of D-ribulose 1,5-bisphosphate, the primary event in carbon dioxide fixation, as well as the oxidative fragmentation of the pentose substrate in the photorespiration process. Both reactions occur simultaneously and in competition at the same active site. The polypeptide is Ribulose bisphosphate carboxylase large chain (Pinus koraiensis (Korean pine)).